Here is a 511-residue protein sequence, read N- to C-terminus: Glucan endo-1,3-beta-glucosidase 1 (511 aa).

The N-terminal stretch at 1–28 (MAFTSMVSTVPVLFFFFTLLLISANSSS) is a signal peptide. Asn109 carries an N-linked (GlcNAc...) asparagine glycan. The active-site Proton donor is Glu137. N-linked (GlcNAc...) asparagine glycans are attached at residues Asn192 and Asn274. Glu284 (nucleophile) is an active-site residue. N-linked (GlcNAc...) asparagine glycosylation is found at Asn374, Asn378, Asn407, Asn473, and Asn480. A disulfide bridge connects residues Cys382 and Cys445. Ala485 carries the GPI-anchor amidated alanine lipid modification. The propeptide at 486–511 (AGEATSRSLSRGFCVTIMILVTFSIL) is removed in mature form.

Belongs to the glycosyl hydrolase 17 family. Contains two additional disulfide bonds.

The protein localises to the cell membrane. It carries out the reaction Hydrolysis of (1-&gt;3)-beta-D-glucosidic linkages in (1-&gt;3)-beta-D-glucans.. The sequence is that of Glucan endo-1,3-beta-glucosidase 1 from Arabidopsis thaliana (Mouse-ear cress).